Consider the following 874-residue polypeptide: Alanine--tRNA ligase (874 aa).

Zn(2+) contacts are provided by His562, His566, Cys665, and His669.

Belongs to the class-II aminoacyl-tRNA synthetase family. Zn(2+) is required as a cofactor.

The protein resides in the cytoplasm. The catalysed reaction is tRNA(Ala) + L-alanine + ATP = L-alanyl-tRNA(Ala) + AMP + diphosphate. Catalyzes the attachment of alanine to tRNA(Ala) in a two-step reaction: alanine is first activated by ATP to form Ala-AMP and then transferred to the acceptor end of tRNA(Ala). Also edits incorrectly charged Ser-tRNA(Ala) and Gly-tRNA(Ala) via its editing domain. The sequence is that of Alanine--tRNA ligase from Pseudomonas savastanoi pv. phaseolicola (strain 1448A / Race 6) (Pseudomonas syringae pv. phaseolicola (strain 1448A / Race 6)).